The sequence spans 472 residues: Radical SAM cyclopropyl synthase TigE (472 aa).

The Radical SAM core domain occupies 106 to 331 (GEQIKAIQLV…VIDLYEYGLD (226 aa)). The [4Fe-4S] cluster site is built by Cys120, Cys124, Cys127, Tyr339, Cys360, Cys378, Cys414, Cys417, Cys423, Cys427, and Cys446.

It belongs to the radical SAM superfamily. [4Fe-4S] cluster serves as cofactor.

It catalyses the reaction L-isoleucyl-[protein] + AH2 + 2 S-adenosyl-L-methionine = methylcyclopropylglycine-[protein] + 2 5'-deoxyadenosine + 2 L-methionine + A + 2 H(+). Radical S-adenosylmethionine (SAM) enzyme that catalyzes the formation of methylcyclopropylglycine (mCPG) residues from isoleucine residues residing in the repeating TIGSVS motif of the precursor peptide TigB. Is thus involved in the maturation of a ribosomally synthesized and post-translationally modified peptide (RiPP). The sequence is that of Radical SAM cyclopropyl synthase TigE from Paramaledivibacter caminithermalis (strain DSM 15212 / CIP 107654 / DViRD3) (Clostridium caminithermale).